The primary structure comprises 494 residues: Argininosuccinate lyase (494 aa).

The protein belongs to the lyase 1 family. Argininosuccinate lyase subfamily.

The protein localises to the cytoplasm. It carries out the reaction 2-(N(omega)-L-arginino)succinate = fumarate + L-arginine. It functions in the pathway amino-acid biosynthesis; L-arginine biosynthesis; L-arginine from L-ornithine and carbamoyl phosphate: step 3/3. The polypeptide is Argininosuccinate lyase (Methanosphaerula palustris (strain ATCC BAA-1556 / DSM 19958 / E1-9c)).